The following is a 284-amino-acid chain: D-tagatose-1,6-bisphosphate aldolase subunit GatY (284 aa).

Catalysis depends on D82, which acts as the Proton donor. Residues H83 and H180 each coordinate Zn(2+). Position 181 (G181) interacts with dihydroxyacetone phosphate. H208 is a Zn(2+) binding site. Dihydroxyacetone phosphate is bound by residues 209–211 (GAS) and 230–233 (NVAT).

It belongs to the class II fructose-bisphosphate aldolase family. TagBP aldolase GatY subfamily. Forms a complex with GatZ. Zn(2+) is required as a cofactor.

It carries out the reaction D-tagatofuranose 1,6-bisphosphate = D-glyceraldehyde 3-phosphate + dihydroxyacetone phosphate. The protein operates within carbohydrate metabolism; D-tagatose 6-phosphate degradation; D-glyceraldehyde 3-phosphate and glycerone phosphate from D-tagatose 6-phosphate: step 2/2. Functionally, catalytic subunit of the tagatose-1,6-bisphosphate aldolase GatYZ, which catalyzes the reversible aldol condensation of dihydroxyacetone phosphate (DHAP or glycerone-phosphate) with glyceraldehyde 3-phosphate (G3P) to produce tagatose 1,6-bisphosphate (TBP). Requires GatZ subunit for full activity and stability. Is involved in the catabolism of galactitol. The polypeptide is D-tagatose-1,6-bisphosphate aldolase subunit GatY (Shigella sonnei (strain Ss046)).